The primary structure comprises 395 residues: Subtilisin-like protease 9 (395 aa).

An N-terminal signal peptide occupies residues 1–20 (MGFFRTLFSFSIFALSLADT). The propeptide occupies 21 to 120 (SKFIGLDDVD…ADRVVKMAAL (100 aa)). Positions 36-117 (SYIVVMKGAV…YVEADRVVKM (82 aa)) constitute an Inhibitor I9 domain. Positions 128–395 (SWGLGRISHK…RRLLYNGSGA (268 aa)) constitute a Peptidase S8 domain. Residues aspartate 160 and histidine 191 each act as charge relay system in the active site. N-linked (GlcNAc...) asparagine glycosylation occurs at asparagine 252. Serine 341 (charge relay system) is an active-site residue. N-linked (GlcNAc...) asparagine glycosylation is present at asparagine 391.

The protein belongs to the peptidase S8 family.

Its subcellular location is the secreted. In terms of biological role, secreted subtilisin-like serine protease with keratinolytic activity that contributes to pathogenicity. The polypeptide is Subtilisin-like protease 9 (SUB9) (Arthroderma otae (strain ATCC MYA-4605 / CBS 113480) (Microsporum canis)).